Here is a 726-residue protein sequence, read N- to C-terminus: Delta-1-pyrroline-5-carboxylate synthase B (726 aa).

Residues 1–296 (MTEIDRSRAF…WAPVVDTTSR (296 aa)) are glutamate 5-kinase. Positions 60, 157, and 176 each coordinate substrate. Residues 196-197 (SD) and 236-242 (RGGMTAK) each bind ATP. Residues 297–717 (DMAVAARESS…YTHKDLPVLQ (421 aa)) form a gamma-glutamyl phosphate reductase region.

The protein in the N-terminal section; belongs to the glutamate 5-kinase family. This sequence in the C-terminal section; belongs to the gamma-glutamyl phosphate reductase family.

It carries out the reaction L-glutamate + ATP = L-glutamyl 5-phosphate + ADP. The enzyme catalyses L-glutamate 5-semialdehyde + phosphate + NADP(+) = L-glutamyl 5-phosphate + NADPH + H(+). The protein operates within amino-acid biosynthesis; L-proline biosynthesis; L-glutamate 5-semialdehyde from L-glutamate: step 1/2. It participates in amino-acid biosynthesis; L-proline biosynthesis; L-glutamate 5-semialdehyde from L-glutamate: step 2/2. Its function is as follows. P5CS plays a key role in proline biosynthesis, leading to osmoregulation in plants. This is Delta-1-pyrroline-5-carboxylate synthase B (P5CSB) from Arabidopsis thaliana (Mouse-ear cress).